The chain runs to 221 residues: MASIDEGSRVERRFCAVGNHTLRKPYRQLNNKYLVRFACLLNSEIRAGNLICCKCYTDLVRLYRKKNDNAKRHKMARETAASITDVSGSQSSSHQSAPSLHVSGQSSEFGASYSEGGIVTPDEELCSHRSLSQDSDNVPTTSAAAIQKRQLARANLMVKPSQRLSLAQTTPDCDDYDPNSNLSLNAVNGTRLPHIQPIPKRRPTVLDKQSMDIYLMGTTGG.

The tract at residues 69–113 is disordered; that stretch reads NAKRHKMARETAASITDVSGSQSSSHQSAPSLHVSGQSSEFGASY. Over residues 86–103 the composition is skewed to low complexity; sequence VSGSQSSSHQSAPSLHVS.

In terms of assembly, component of the HipHop-HOAP telomere-capping complex, composed of at least HipHop and cav/HOAP, and may include Su(var)205/HP1; HipHop and cav/HOAP, but not Su(var)205, are interdependent for their protein stability. Interacts (via N-terminus) with cav/HOAP and Su(var)205/HP1. The HipHop-HOAP complex recruits the MTV complex, consisting of moi/modigliani, tea and ver/verrocchio, to telomeres to form the terminin telomere-capping complex.

The protein resides in the nucleus. Its subcellular location is the chromosome. The protein localises to the telomere. Its function is as follows. Part of the HipHop-HOAP complex that recruits the MTV complex to form the terminin telomere-capping complex, which binds to chromosome ends in a sequence-independent manner and prevents telomere fusion. This is HP1-HOAP-interacting protein from Drosophila melanogaster (Fruit fly).